The primary structure comprises 307 residues: Small ribosomal subunit biogenesis GTPase RsgA (307 aa).

Residues 80–237 (KADLRQTIVS…IVDTPGIKEF (158 aa)) enclose the CP-type G domain. Residues 129 to 132 (NKID) and 180 to 188 (GQSGVGKSS) contribute to the GTP site. C261, C266, H268, and C274 together coordinate Zn(2+).

It belongs to the TRAFAC class YlqF/YawG GTPase family. RsgA subfamily. In terms of assembly, monomer. Associates with 30S ribosomal subunit, binds 16S rRNA. It depends on Zn(2+) as a cofactor.

It is found in the cytoplasm. Functionally, one of several proteins that assist in the late maturation steps of the functional core of the 30S ribosomal subunit. Helps release RbfA from mature subunits. May play a role in the assembly of ribosomal proteins into the subunit. Circularly permuted GTPase that catalyzes slow GTP hydrolysis, GTPase activity is stimulated by the 30S ribosomal subunit. The polypeptide is Small ribosomal subunit biogenesis GTPase RsgA (Borreliella burgdorferi (strain ATCC 35210 / DSM 4680 / CIP 102532 / B31) (Borrelia burgdorferi)).